We begin with the raw amino-acid sequence, 280 residues long: Shikimate dehydrogenase (NADP(+)) (280 aa).

Residues 15–17 (SMS) and T62 each bind shikimate. K66 functions as the Proton acceptor in the catalytic mechanism. E78 provides a ligand contact to NADP(+). The shikimate site is built by N87 and D102. Residues 127-131 (GAGGA), 151-156 (NRTLEK), and I219 each bind NADP(+). Y221 is a shikimate binding site. G242 lines the NADP(+) pocket.

This sequence belongs to the shikimate dehydrogenase family. As to quaternary structure, homodimer.

It catalyses the reaction shikimate + NADP(+) = 3-dehydroshikimate + NADPH + H(+). It participates in metabolic intermediate biosynthesis; chorismate biosynthesis; chorismate from D-erythrose 4-phosphate and phosphoenolpyruvate: step 4/7. In terms of biological role, involved in the biosynthesis of the chorismate, which leads to the biosynthesis of aromatic amino acids. Catalyzes the reversible NADPH linked reduction of 3-dehydroshikimate (DHSA) to yield shikimate (SA). The polypeptide is Shikimate dehydrogenase (NADP(+)) (Bacillus subtilis (strain 168)).